The sequence spans 159 residues: Putative ribosomal RNA large subunit methyltransferase H (159 aa).

S-adenosyl-L-methionine is bound by residues leucine 76, glycine 108, and 127–132 (LSPLTF).

It belongs to the RNA methyltransferase RlmH family.

It is found in the cytoplasm. The enzyme catalyses pseudouridine(1915) in 23S rRNA + S-adenosyl-L-methionine = N(3)-methylpseudouridine(1915) in 23S rRNA + S-adenosyl-L-homocysteine + H(+). Specifically methylates the pseudouridine at position 1915 (m3Psi1915) in 23S rRNA. The protein is Putative ribosomal RNA large subunit methyltransferase H of Methanoregula boonei (strain DSM 21154 / JCM 14090 / 6A8).